A 216-amino-acid polypeptide reads, in one-letter code: Glycerol-3-phosphate acyltransferase 3 (216 aa).

The next 5 membrane-spanning stretches (helical) occupy residues 6-26 (LLLV…YLVS), 58-78 (LVAS…GLVI), 92-112 (LLFA…WPVF), 125-145 (FGGM…VLII), and 158-178 (ITGV…SGFP).

The protein belongs to the PlsY family. In terms of assembly, probably interacts with PlsX.

Its subcellular location is the cell membrane. The catalysed reaction is an acyl phosphate + sn-glycerol 3-phosphate = a 1-acyl-sn-glycero-3-phosphate + phosphate. Its pathway is lipid metabolism; phospholipid metabolism. Catalyzes the transfer of an acyl group from acyl-phosphate (acyl-PO(4)) to glycerol-3-phosphate (G3P) to form lysophosphatidic acid (LPA). This enzyme utilizes acyl-phosphate as fatty acyl donor, but not acyl-CoA or acyl-ACP. The polypeptide is Glycerol-3-phosphate acyltransferase 3 (Dehalococcoides mccartyi (strain CBDB1)).